The primary structure comprises 359 residues: DNA replication and repair protein RecF (359 aa).

30-37 (GPNGSGKT) provides a ligand contact to ATP.

This sequence belongs to the RecF family.

Its subcellular location is the cytoplasm. The RecF protein is involved in DNA metabolism; it is required for DNA replication and normal SOS inducibility. RecF binds preferentially to single-stranded, linear DNA. It also seems to bind ATP. The sequence is that of DNA replication and repair protein RecF from Vibrio vulnificus (strain YJ016).